The primary structure comprises 98 residues: Cell division topological specificity factor (98 aa).

Belongs to the MinE family.

Prevents the cell division inhibition by proteins MinC and MinD at internal division sites while permitting inhibition at polar sites. This ensures cell division at the proper site by restricting the formation of a division septum at the midpoint of the long axis of the cell. This is Cell division topological specificity factor from Moorella thermoacetica (strain ATCC 39073 / JCM 9320).